Consider the following 288-residue polypeptide: Elongation factor Ts (288 aa).

The tract at residues 79–82 is involved in Mg(2+) ion dislocation from EF-Tu; that stretch reads TDFV.

It belongs to the EF-Ts family.

The protein localises to the cytoplasm. Associates with the EF-Tu.GDP complex and induces the exchange of GDP to GTP. It remains bound to the aminoacyl-tRNA.EF-Tu.GTP complex up to the GTP hydrolysis stage on the ribosome. This Ehrlichia canis (strain Jake) protein is Elongation factor Ts.